Reading from the N-terminus, the 1301-residue chain is DNA-directed RNA polymerase subunit beta (1301 aa).

This sequence belongs to the RNA polymerase beta chain family. In plastids the minimal PEP RNA polymerase catalytic core is composed of four subunits: alpha, beta, beta', and beta''. When a (nuclear-encoded) sigma factor is associated with the core the holoenzyme is formed, which can initiate transcription.

Its subcellular location is the plastid. It is found in the chloroplast. The catalysed reaction is RNA(n) + a ribonucleoside 5'-triphosphate = RNA(n+1) + diphosphate. DNA-dependent RNA polymerase catalyzes the transcription of DNA into RNA using the four ribonucleoside triphosphates as substrates. The chain is DNA-directed RNA polymerase subunit beta from Chlorella vulgaris (Green alga).